A 108-amino-acid chain; its full sequence is Insulin (108 aa).

Residues M1–T21 form the signal peptide. Cystine bridges form between C30-C94, C42-C107, and C93-C98. The propeptide at D54–I84 is c peptide.

It belongs to the insulin family. As to quaternary structure, heterodimer of a B chain and an A chain linked by two disulfide bonds.

Its subcellular location is the secreted. Its function is as follows. Insulin decreases blood glucose concentration. It increases cell permeability to monosaccharides, amino acids and fatty acids. It accelerates glycolysis, the pentose phosphate cycle, and glycogen synthesis in liver. The polypeptide is Insulin (ins) (Danio rerio (Zebrafish)).